Reading from the N-terminus, the 222-residue chain is Niacin transporter NiaX (222 aa).

Transmembrane regions (helical) follow at residues 34–54, 72–94, 101–120, 135–155, and 167–187; these read NLIIAAMLTALGILIPMMMPV, MAAMFFSPLMTAFVALGTTLGFM, TIWLRALMHLPVMTVGAYVL, IFNFILGIFHAGLETLVVYAF, and ALLNFLLLIALGGLVHSMIDF.

This sequence belongs to the vitamin uptake transporter (VUT/ECF) (TC 2.A.88) family. In L.lactis forms a stable complex with EcfA, EcfA' and EcfT. In E.coli forms a stable energy-coupling factor (ECF) transporter complex composed of 2 membrane-embedded substrate-binding proteins (S component), 2 ATP-binding proteins (A and A' components) and 2 transmembrane proteins (T component), probably with a stoichiometry of 2:1:1:2. May be able to interact with more than 1 S component at a time.

It localises to the cell membrane. Its function is as follows. Probably a niacin-binding protein that interacts with the energy-coupling factor (ECF) ABC-transporter complex. Unlike classic ABC transporters this ECF transporter provides the energy necessary to transport a number of different substrates. The substrates themselves are bound by transmembrane, not extracytoplasmic soluble proteins. Uptake of niacin into proteosomes containing EcfA1A2T and Niax has been demonstrated. Uptake requires hydrolyzable Mg-ATP and is substrate-specific; NiaX-containing proteosomes did not transport riboflavin. The protein is Niacin transporter NiaX (niaX) of Lactococcus lactis subsp. cremoris (strain MG1363).